We begin with the raw amino-acid sequence, 162 residues long: uncharacterized protein (162 aa).

A PUA domain is found at 78–154; the sequence is KNLVVVDIGA…KAIKNLHYVG (77 aa).

This is an uncharacterized protein from Methanocaldococcus jannaschii (strain ATCC 43067 / DSM 2661 / JAL-1 / JCM 10045 / NBRC 100440) (Methanococcus jannaschii).